The chain runs to 164 residues: NADH-quinone oxidoreductase subunit B (164 aa).

[4Fe-4S] cluster contacts are provided by Cys-38, Cys-39, Cys-104, and Cys-133.

Belongs to the complex I 20 kDa subunit family. NDH-1 is composed of 14 different subunits. Subunits NuoB, C, D, E, F, and G constitute the peripheral sector of the complex. [4Fe-4S] cluster is required as a cofactor.

It is found in the cell inner membrane. The enzyme catalyses a quinone + NADH + 5 H(+)(in) = a quinol + NAD(+) + 4 H(+)(out). In terms of biological role, NDH-1 shuttles electrons from NADH, via FMN and iron-sulfur (Fe-S) centers, to quinones in the respiratory chain. The immediate electron acceptor for the enzyme in this species is believed to be ubiquinone. Couples the redox reaction to proton translocation (for every two electrons transferred, four hydrogen ions are translocated across the cytoplasmic membrane), and thus conserves the redox energy in a proton gradient. In Protochlamydia amoebophila (strain UWE25), this protein is NADH-quinone oxidoreductase subunit B.